Reading from the N-terminus, the 148-residue chain is Large ribosomal subunit protein bL27m (148 aa).

The N-terminal 30 residues, 1 to 30 (MAAAALTLRTRAAVTALLSPTAPTALAVRH), are a transit peptide targeting the mitochondrion. Residues 28–48 (VRHASKKTGGSSKNLGGKSRG) form a disordered region.

This sequence belongs to the bacterial ribosomal protein bL27 family. In terms of assembly, component of the mitochondrial ribosome large subunit (39S) which comprises a 16S rRNA and about 50 distinct proteins.

Its subcellular location is the mitochondrion. This Mus musculus (Mouse) protein is Large ribosomal subunit protein bL27m (Mrpl27).